The chain runs to 545 residues: Membrane protein insertase YidC (545 aa).

A helical transmembrane segment spans residues 6–26 (FVLFVFFIFLSFLLWEQWQID). Residues 32–69 (QAVAQTDGASRPAGDLPQRPSDDESDVTVHTEAPTQEG) are disordered. 4 helical membrane-spanning segments follow: residues 354-374 (FFNN…ALFF), 425-445 (GGCL…WVLV), 462-482 (LSSK…MFIQ), and 500-520 (FFPL…VLYW).

Belongs to the OXA1/ALB3/YidC family. Type 1 subfamily. Interacts with the Sec translocase complex via SecD. Specifically interacts with transmembrane segments of nascent integral membrane proteins during membrane integration.

The protein localises to the cell inner membrane. Its function is as follows. Required for the insertion and/or proper folding and/or complex formation of integral membrane proteins into the membrane. Involved in integration of membrane proteins that insert both dependently and independently of the Sec translocase complex, as well as at least some lipoproteins. Aids folding of multispanning membrane proteins. In Methylococcus capsulatus (strain ATCC 33009 / NCIMB 11132 / Bath), this protein is Membrane protein insertase YidC.